The sequence spans 602 residues: Elongation factor 4 (602 aa).

The 183-residue stretch at 6–188 folds into the tr-type G domain; the sequence is DHIRNFSIVA…AIVNKLPAPK (183 aa). Residues 18-23 and 135-138 each bind GTP; these read DHGKST and NKID.

This sequence belongs to the TRAFAC class translation factor GTPase superfamily. Classic translation factor GTPase family. LepA subfamily.

The protein localises to the cell inner membrane. It carries out the reaction GTP + H2O = GDP + phosphate + H(+). Required for accurate and efficient protein synthesis under certain stress conditions. May act as a fidelity factor of the translation reaction, by catalyzing a one-codon backward translocation of tRNAs on improperly translocated ribosomes. Back-translocation proceeds from a post-translocation (POST) complex to a pre-translocation (PRE) complex, thus giving elongation factor G a second chance to translocate the tRNAs correctly. Binds to ribosomes in a GTP-dependent manner. The chain is Elongation factor 4 from Brucella suis (strain ATCC 23445 / NCTC 10510).